The primary structure comprises 886 residues: Semaphorin-6B (886 aa).

The signal sequence occupies residues 1–26 (MWTPRVPPPRPALSFFLLLLLGVTYG). At 27-605 (LFPEEPPPLS…VSVNLLVTSS (579 aa)) the chain is on the extracellular side. The Sema domain occupies 32-525 (PPPLSVAPRD…FPRCVVRVPV (494 aa)). N-linked (GlcNAc...) asparagine glycosylation occurs at asparagine 75. 2 disulfides stabilise this stretch: cysteine 117-cysteine 127 and cysteine 145-cysteine 154. N-linked (GlcNAc...) asparagine glycosylation is found at asparagine 156 and asparagine 292. 2 cysteine pairs are disulfide-bonded: cysteine 268–cysteine 379 and cysteine 293–cysteine 338. N-linked (GlcNAc...) asparagine glycosylation is found at asparagine 387, asparagine 442, and asparagine 463. Intrachain disulfides connect cysteine 487/cysteine 519, cysteine 528/cysteine 546, cysteine 534/cysteine 580, and cysteine 538/cysteine 554. Residues 606–626 (VAAFVVGAVVSGFSVGWFVGL) traverse the membrane as a helical segment. The Cytoplasmic portion of the chain corresponds to 627–886 (RERRELARRK…TGERTAPPVP (260 aa)). Disordered regions lie at residues 655–677 (RLGE…PGGP), 697–731 (HGGP…AHAL), and 761–886 (EQPQ…PPVP). Residues 662-674 (TGPGGRGGAGGGP) are compositionally biased toward gly residues. Arginine 667 carries the post-translational modification Omega-N-methylarginine. A compositionally biased stretch (low complexity) spans 707–718 (LLPTPEQTPLPQ).

The protein belongs to the semaphorin family. As to quaternary structure, homodimer. Binds specifically the SH3 domain of the protooncogene C-SRC. In terms of tissue distribution, in adulthood, it is expressed ubiquitously.

Its subcellular location is the cell membrane. Its function is as follows. Functions as a cell surface repellent for mossy fibers of developing neurons in the hippocampus where it plays a role in axon guidance. May function through the PLXNA4 receptor expressed by mossy cell axons. The chain is Semaphorin-6B (Sema6b) from Mus musculus (Mouse).